The sequence spans 127 residues: Large ribosomal subunit protein bL17 (127 aa).

This sequence belongs to the bacterial ribosomal protein bL17 family. Part of the 50S ribosomal subunit. Contacts protein L32.

This chain is Large ribosomal subunit protein bL17, found in Legionella pneumophila (strain Corby).